The sequence spans 353 residues: UDP-3-O-acylglucosamine N-acyltransferase (353 aa).

His242 serves as the catalytic Proton acceptor.

It belongs to the transferase hexapeptide repeat family. LpxD subfamily. As to quaternary structure, homotrimer.

The enzyme catalyses a UDP-3-O-[(3R)-3-hydroxyacyl]-alpha-D-glucosamine + a (3R)-hydroxyacyl-[ACP] = a UDP-2-N,3-O-bis[(3R)-3-hydroxyacyl]-alpha-D-glucosamine + holo-[ACP] + H(+). Its pathway is bacterial outer membrane biogenesis; LPS lipid A biosynthesis. In terms of biological role, catalyzes the N-acylation of UDP-3-O-acylglucosamine using 3-hydroxyacyl-ACP as the acyl donor. Is involved in the biosynthesis of lipid A, a phosphorylated glycolipid that anchors the lipopolysaccharide to the outer membrane of the cell. In Pseudomonas aeruginosa (strain UCBPP-PA14), this protein is UDP-3-O-acylglucosamine N-acyltransferase.